Reading from the N-terminus, the 415-residue chain is MRVLLTSFAHRTHFQGLVPLAWALRTAGHDVRVAAQPALTDAVIGAGLTAVPVGSDHRLFDIVPEVAAQVHRYSFYLDFYHREQELHSWEFLLGMQEATSRWVYPVVNNDSFVAELVDFARDWRPDLVLWEPFTFAGAVAARACGAAHARLLWGSDLTGYFRGRFQAQRLRRPPEDRPDPLGTWLTEVAGRFGVEFGEDLAVGQWSVDQLPPSFRLDTGMETVVARTLPYNGASVVPDWLKKGSATRRICITGGFSGLGLAADADQFARTLAQLARFDGEIVVTGSGPDTSAVPDNIRLVDFVPMGVLLQNCAAIIHHGGAGTWATALHHGIPQISVAHEWDCMLRGQQTAELGAGIYLRPDEVDADSLASALTQVVEDPTYTENAVKLREEALSDPTPQEIVPRLEELTRRHAG.

The protein belongs to the glycosyltransferase 28 family.

The enzyme catalyses dTDP-beta-L-mycarose + erythronolide B = 3-O-alpha-L-mycarosylerythronolide B + dTDP + H(+). In terms of biological role, involved in the biosynthesis of the macrolide antibiotic erythromycin. Catalyzes the reversible transfer of mycarosyl from dTDP-beta-L-mycarose to erythronolide B to yield 3-alpha-L-mycarosylerythronolide B. It can also use TDP-beta-L-cladinose. This chain is Erythronolide mycarosyltransferase, found in Saccharopolyspora erythraea (Streptomyces erythraeus).